A 347-amino-acid chain; its full sequence is NADH-ubiquinone oxidoreductase chain 2 (347 aa).

The next 10 membrane-spanning stretches (helical) occupy residues 1-21 (MNPLVFTMIMSTVMLGTAIVA), 25-45 (HWLMAWIGFEMNMLAVIPILM), 59-79 (YFLTQATASMLLMLAVTMNLV), 111-131 (FHFWVPEVTQGISLPSGLILL), 149-169 (INLDLLMMLINLSIAIGGWGG), 178-198 (IMAYSSIAHMGWMTAILTYNP), 201-221 (TLLNLMIYILLTTTTFMMFML), 237-257 (MPLLTTAILLTMLSLGGLPPL), 274-294 (NSVIMPTTMAVMALLNLYFYM), and 326-346 (LSPLIILSTLILPLSPMLALL).

The protein belongs to the complex I subunit 2 family. As to quaternary structure, core subunit of respiratory chain NADH dehydrogenase (Complex I) which is composed of 45 different subunits. Interacts with TMEM242.

The protein resides in the mitochondrion inner membrane. The catalysed reaction is a ubiquinone + NADH + 5 H(+)(in) = a ubiquinol + NAD(+) + 4 H(+)(out). Core subunit of the mitochondrial membrane respiratory chain NADH dehydrogenase (Complex I) which catalyzes electron transfer from NADH through the respiratory chain, using ubiquinone as an electron acceptor. Essential for the catalytic activity and assembly of complex I. This is NADH-ubiquinone oxidoreductase chain 2 from Pteropus rodricensis (Rodriguez flying fox).